A 322-amino-acid polypeptide reads, in one-letter code: tRNA-dihydrouridine synthase B (322 aa).

FMN-binding positions include Pro16–Ala18 and Gln70. Cys100 (proton donor) is an active-site residue. FMN is bound by residues Lys139, Asn200–Asp202, and Gly224–Arg225.

It belongs to the Dus family. DusB subfamily. Requires FMN as cofactor.

The catalysed reaction is a 5,6-dihydrouridine in tRNA + NAD(+) = a uridine in tRNA + NADH + H(+). It carries out the reaction a 5,6-dihydrouridine in tRNA + NADP(+) = a uridine in tRNA + NADPH + H(+). Its function is as follows. Catalyzes the synthesis of 5,6-dihydrouridine (D), a modified base found in the D-loop of most tRNAs, via the reduction of the C5-C6 double bond in target uridines. This chain is tRNA-dihydrouridine synthase B, found in Vibrio cholerae serotype O1 (strain ATCC 39315 / El Tor Inaba N16961).